A 360-amino-acid chain; its full sequence is Insulin gene enhancer protein ISL-2 (360 aa).

LIM zinc-binding domains are found at residues 25 to 86 (AMCV…RLFG) and 87 to 149 (IKCA…LLER). Positions 151–177 (AAGSPRSPGPLPGTPPGLHLPDAGSGQ) are disordered. 2 positions are modified to phosphoserine: Ser-154 and Ser-157. The segment at residues 192–251 (TTRVRTVLNEKQLHTLRTCYAANPRPDALMKEQLVEMTGLSPRVIRVWFQNKRCKDKKKS) is a DNA-binding region (homeobox). An LIM-binding domain (LID) region spans residues 273 to 302 (GTLLVAGSPSAHENAVQGSAVEVQTYQPPW). Ser-280 bears the Phosphoserine mark. Positions 328–337 (SGSLGNSSGS) are enriched in low complexity. The interval 328 to 360 (SGSLGNSSGSDVTSLSSQLPDTPNSMVPSPVET) is disordered. Residues 338–360 (DVTSLSSQLPDTPNSMVPSPVET) show a composition bias toward polar residues.

As to quaternary structure, interacts with LHX4.

It is found in the nucleus. Transcriptional factor that defines subclasses of motoneurons that segregate into columns in the spinal cord and select distinct axon pathways. In Rattus norvegicus (Rat), this protein is Insulin gene enhancer protein ISL-2 (Isl2).